Here is a 35-residue protein sequence, read N- to C-terminus: Phosphoribulokinase (35 aa).

The protein belongs to the phosphoribulokinase family.

It localises to the plastid. It is found in the chloroplast. It carries out the reaction D-ribulose 5-phosphate + ATP = D-ribulose 1,5-bisphosphate + ADP + H(+). It functions in the pathway carbohydrate biosynthesis; Calvin cycle. With respect to regulation, light regulated via thioredoxin by reversible oxidation/reduction of sulfhydryl/disulfide groups. The chain is Phosphoribulokinase from Pinus pinaster (Maritime pine).